Here is a 101-residue protein sequence, read N- to C-terminus: Transcription and mRNA export factor SUS1 (101 aa).

This sequence belongs to the ENY2 family. In terms of assembly, component of the nuclear pore complex (NPC)-associated TREX-2 complex (transcription and export complex 2), composed of at least SUS1, SAC3, THP1, SEM1, and CDC31. TREX-2 contains 2 SUS1 chains. The TREX-2 complex interacts with the nucleoporin NUP1. Component of the 1.8 MDa SAGA transcription coactivator-HAT complex. SAGA is built of 5 distinct domains with specialized functions. Within the SAGA complex, SUS1, SGF11, SGF73 and UBP8 form an additional subcomplex of SAGA called the DUB module (deubiquitination module). Interacts directly with THP1, SAC3, SGF11, and with the RNA polymerase II.

Its subcellular location is the nucleus. It is found in the nucleoplasm. The protein localises to the cytoplasm. The protein resides in the P-body. Involved in mRNA export coupled transcription activation by association with both the TREX-2 and the SAGA complexes. At the promoters, SAGA is required for recruitment of the basal transcription machinery. It influences RNA polymerase II transcriptional activity through different activities such as TBP interaction and promoter selectivity, interaction with transcription activators, and chromatin modification through histone acetylation and deubiquitination. Within the SAGA complex, participates in a subcomplex required for deubiquitination of H2B and for the maintenance of steady-state H3 methylation levels. The TREX-2 complex functions in docking export-competent ribonucleoprotein particles (mRNPs) to the nuclear entrance of the nuclear pore complex (nuclear basket). TREX-2 participates in mRNA export and accurate chromatin positioning in the nucleus by tethering genes to the nuclear periphery. May also be involved in cytoplasmic mRNA decay by interaction with components of P-bodies. This Debaryomyces hansenii (strain ATCC 36239 / CBS 767 / BCRC 21394 / JCM 1990 / NBRC 0083 / IGC 2968) (Yeast) protein is Transcription and mRNA export factor SUS1.